Reading from the N-terminus, the 122-residue chain is Large ribosomal subunit protein uL14c (122 aa).

The protein belongs to the universal ribosomal protein uL14 family. Part of the 50S ribosomal subunit.

It is found in the plastid. The protein resides in the chloroplast. In terms of biological role, binds to 23S rRNA. The polypeptide is Large ribosomal subunit protein uL14c (Gnetum parvifolium (Small-leaved jointfir)).